A 173-amino-acid chain; its full sequence is Shikimate kinase 1 (173 aa).

Position 14-19 (14-19 (GAGKST)) interacts with ATP. Ser-18 is a binding site for Mg(2+). Asp-36, Arg-60, and Gly-82 together coordinate substrate. Residue Arg-120 coordinates ATP. Residue Arg-140 coordinates substrate. Gln-157 contributes to the ATP binding site.

This sequence belongs to the shikimate kinase family. Monomer. Mg(2+) serves as cofactor.

It is found in the cytoplasm. It catalyses the reaction shikimate + ATP = 3-phosphoshikimate + ADP + H(+). It participates in metabolic intermediate biosynthesis; chorismate biosynthesis; chorismate from D-erythrose 4-phosphate and phosphoenolpyruvate: step 5/7. In terms of biological role, catalyzes the specific phosphorylation of the 3-hydroxyl group of shikimic acid using ATP as a cosubstrate. This is Shikimate kinase 1 from Erwinia tasmaniensis (strain DSM 17950 / CFBP 7177 / CIP 109463 / NCPPB 4357 / Et1/99).